An 88-amino-acid polypeptide reads, in one-letter code: Sm-like protein LSM5 (88 aa).

Residue Ala-2 is modified to N-acetylalanine. The Sm domain occupies 9–84 (LPSELIDRCI…IAILVPGGSP (76 aa)).

This sequence belongs to the snRNP Sm proteins family. As to quaternary structure, component of the heptameric LSM1-LSM7 complex that forms a seven-membered ring structure with a donut shape. The LSM subunits are arranged in the order LSM1, LSM2, LSM3, LSM6, LSM5, LSM7 and LSM4. Component of the heptameric LSM2-LSM8 complex that forms a seven-membered ring structure with a donut shape. The LSM subunits are arranged in the order LSM8, LSM2, LSM3, LSM6, LSM5, LSM7 and LSM4. LSM2 subunit interacts only with its two neighboring subunits, LSM6A or LSM6B and LSM7. Expressed in roots, leaves, stems, flowers and siliques.

The protein localises to the cytoplasm. The protein resides in the nucleus. In terms of biological role, component of LSM protein complexes, which are involved in RNA processing. Component of the cytoplasmic LSM1-LSM7 complex which is involved in mRNA degradation by promoting decapping and leading to accurate 5'-3' mRNA decay. The cytoplasmic LSM1-LSM7 complex regulates developmental gene expression by the decapping of specific development-related transcripts. Component of the nuclear LSM2-LSM8 complex which is involved splicing nuclear mRNAs. LSM2-LSM8 binds directly to the U6 small nuclear RNAs (snRNAs) and is essential for accurate splicing of selected development-related mRNAs through the stabilization of the spliceosomal U6 snRNA. Plays a critical role in the regulation of development-related gene expression. Involved in the control of plant sensitivity to abscisic acid (ABA) and drought. Functions with ABH1 as negative regulator of ABA signaling in guard cells. Required for regulation of splicing efficiency of many stress-responsive genes under stress conditions. The protein is Sm-like protein LSM5 of Arabidopsis thaliana (Mouse-ear cress).